The sequence spans 296 residues: dTDP-rhamnosyl transferase RfbF (296 aa).

The protein belongs to the glycosyltransferase 2 family.

It functions in the pathway bacterial outer membrane biogenesis; lipopolysaccharide biosynthesis. The polypeptide is dTDP-rhamnosyl transferase RfbF (rfbF) (Shigella flexneri).